Reading from the N-terminus, the 396-residue chain is Phosphoglycerate kinase (396 aa).

Substrate is bound by residues 21-23 (DFN), R37, 60-63 (HLGR), R121, and R154. ATP is bound by residues K205, G296, E327, and 353 to 356 (GGDS).

This sequence belongs to the phosphoglycerate kinase family. In terms of assembly, monomer.

It is found in the cytoplasm. The catalysed reaction is (2R)-3-phosphoglycerate + ATP = (2R)-3-phospho-glyceroyl phosphate + ADP. Its pathway is carbohydrate degradation; glycolysis; pyruvate from D-glyceraldehyde 3-phosphate: step 2/5. In Anaeromyxobacter dehalogenans (strain 2CP-1 / ATCC BAA-258), this protein is Phosphoglycerate kinase.